The following is a 129-amino-acid chain: Glycine cleavage system H protein (129 aa).

The region spanning 23–104 (SVTVGITHHA…AYTAWLFKIK (82 aa)) is the Lipoyl-binding domain. The residue at position 64 (Lys-64) is an N6-lipoyllysine.

Belongs to the GcvH family. As to quaternary structure, the glycine cleavage system is composed of four proteins: P, T, L and H. It depends on (R)-lipoate as a cofactor.

The glycine cleavage system catalyzes the degradation of glycine. The H protein shuttles the methylamine group of glycine from the P protein to the T protein. The protein is Glycine cleavage system H protein of Thiobacillus denitrificans (strain ATCC 25259 / T1).